The chain runs to 444 residues: Probable galactarate/D-glucarate transporter GarP (444 aa).

Topologically, residues 1–11 (MILDTVDEKKK) are cytoplasmic. The chain crosses the membrane as a helical span at residues 12-32 (GVHTRYLILLIIFIVTAVNYA). Residues 33–56 (DRATLSIAGTEVAKELQLSAVSMG) lie on the Periplasmic side of the membrane. The chain crosses the membrane as a helical span at residues 57-77 (YIFSAFGWAYLLMQIPGGWLL). Topologically, residues 78–89 (DKFGSKKVYTYS) are cytoplasmic. Transmembrane regions (helical) follow at residues 90–110 (LFFW…PLAW) and 111–131 (AGIS…PSFP). At 132-157 (ANARIVAAWFPTKERGTASAIFNSAQ) the chain is on the cytoplasmic side. The next 2 membrane-spanning stretches (helical) occupy residues 158–178 (YFSL…WGWE) and 179–199 (HVFT…IKLI). Over 200–252 (HNPTDHPRMSAEELKFISENGAVVDMDHKKPGSAAASGPKLHYIKQLLSNRMM) the chain is Cytoplasmic. Residues 253-273 (LGVFFGQYFINTITWFFLTWF) form a helical membrane-spanning segment. Residues 274-288 (PIYLVQEKGMSILKV) are Periplasmic-facing. A helical transmembrane segment spans residues 289-309 (GLVASIPALCGFAGGVLGGVF). The Cytoplasmic segment spans residues 310 to 319 (SDYLIKRGLS). A helical transmembrane segment spans residues 320–340 (LTLARKLPIVLGMLLASTIIL). At 341-350 (CNYTNNTTLV) the chain is on the periplasmic side. Residues 351 to 371 (VMLMALAFFGKGFGALGWPVI) form a helical membrane-spanning segment. Residues 372–385 (SDTAPKEIVGLCGG) are Cytoplasmic-facing. A helical membrane pass occupies residues 386-406 (VFNVFGNVASIVTPLVIGYLV). Residues 407–413 (SELHSFN) lie on the Periplasmic side of the membrane. The chain crosses the membrane as a helical span at residues 414 to 434 (AALVFVGCSALMAMVCYLFVV). At 435-444 (GDIKRMELQK) the chain is on the cytoplasmic side.

It belongs to the major facilitator superfamily. Phthalate permease family.

It localises to the cell inner membrane. The enzyme catalyses galactarate(in) + H(+)(in) = galactarate(out) + H(+)(out). The catalysed reaction is D-glucarate(in) + H(+)(in) = D-glucarate(out) + H(+)(out). It catalyses the reaction (R)-glycerate(in) + H(+)(in) = (R)-glycerate(out) + H(+)(out). Its function is as follows. Probably involved in the uptake of galactarate and/or D-glucarate. May also transport D-glycerate. The protein is Probable galactarate/D-glucarate transporter GarP of Escherichia coli (strain K12).